The sequence spans 541 residues: Protein VAPYRIN (541 aa).

Residues 4–138 (LIKLDPSNIV…IDSAIKVMFV (135 aa)) form the MSP domain. 10 ANK repeats span residues 176–205 (QGQT…DIEA), 209–238 (VGST…NTEG), 242–271 (SVFR…RVDS), 275–304 (DGNT…RTDV), 309–338 (EGDT…TKYV), 342–372 (LGKT…CAAA), 374–392 (KGEV…VING), 396–425 (NGWT…DLDA), 429–458 (DGYT…DVEA), and 462–491 (KGVS…SREG).

As to quaternary structure, interacts with EX70I at the periarbuscular membrane (PAM) around the arbuscule hyphal tips. As to expression, expressed in roots.

The protein localises to the cytoplasm. It localises to the nucleus. Its subcellular location is the cell membrane. Required for arbuscular mycorrhizal (AM) symbiosis with AM fungi (e.g. Glomus versiforme and Gigaspora gigantea) both during fungal passage across root epidermis and for arbuscule formation in cortical cells; this symbiosis promotes phosphorus (P) and copper (Cu) uptake. Essential for infection by symbiotic nitrogen-fixing rhizobial bacteria (e.g. Sinorhizobium meliloti) leading to the formation of root nodules. This Medicago truncatula (Barrel medic) protein is Protein VAPYRIN.